The chain runs to 228 residues: Eukaryotic translation initiation factor 6 (228 aa).

The protein belongs to the eIF-6 family. Monomer. Associates with the 60S ribosomal subunit.

Its subcellular location is the cytoplasm. It is found in the nucleus. It localises to the nucleolus. Binds to the 60S ribosomal subunit and prevents its association with the 40S ribosomal subunit to form the 80S initiation complex in the cytoplasm. May also be involved in ribosome biogenesis. The polypeptide is Eukaryotic translation initiation factor 6 (Guillardia theta (Cryptophyte)).